The following is a 474-amino-acid chain: Aspartyl/glutamyl-tRNA(Asn/Gln) amidotransferase subunit B (474 aa).

The protein belongs to the GatB/GatE family. GatB subfamily. As to quaternary structure, heterotrimer of A, B and C subunits.

It catalyses the reaction L-glutamyl-tRNA(Gln) + L-glutamine + ATP + H2O = L-glutaminyl-tRNA(Gln) + L-glutamate + ADP + phosphate + H(+). The catalysed reaction is L-aspartyl-tRNA(Asn) + L-glutamine + ATP + H2O = L-asparaginyl-tRNA(Asn) + L-glutamate + ADP + phosphate + 2 H(+). In terms of biological role, allows the formation of correctly charged Asn-tRNA(Asn) or Gln-tRNA(Gln) through the transamidation of misacylated Asp-tRNA(Asn) or Glu-tRNA(Gln) in organisms which lack either or both of asparaginyl-tRNA or glutaminyl-tRNA synthetases. The reaction takes place in the presence of glutamine and ATP through an activated phospho-Asp-tRNA(Asn) or phospho-Glu-tRNA(Gln). The protein is Aspartyl/glutamyl-tRNA(Asn/Gln) amidotransferase subunit B of Desulfotalea psychrophila (strain LSv54 / DSM 12343).